A 152-amino-acid chain; its full sequence is S-protein homolog 4 (152 aa).

Positions 1–23 (MTTMLKTQVHVVVIYLLIQIAFS) are cleaved as a signal peptide. Asparagine 71 carries an N-linked (GlcNAc...) asparagine glycan.

It belongs to the plant self-incompatibility (S1) protein family.

It localises to the secreted. The protein is S-protein homolog 4 of Arabidopsis thaliana (Mouse-ear cress).